Here is a 73-residue protein sequence, read N- to C-terminus: Protein RALF-like 10 (73 aa).

An N-terminal signal peptide occupies residues 1 to 17 (MKALVICLLVIFAAVIA). 2 disulfides stabilise this stretch: Cys35–Cys44 and Cys64–Cys70.

The protein belongs to the plant rapid alkalinization factor (RALF) family. Expressed in flowers.

It localises to the secreted. Functionally, cell signaling peptide that may regulate plant stress, growth, and development. Mediates a rapid alkalinization of extracellular space by mediating a transient increase in the cytoplasmic Ca(2+) concentration leading to a calcium-dependent signaling events through a cell surface receptor and a concomitant activation of some intracellular mitogen-activated protein kinases. The protein is Protein RALF-like 10 (RALFL10) of Arabidopsis thaliana (Mouse-ear cress).